We begin with the raw amino-acid sequence, 144 residues long: Putative sugar phosphate isomerase RBE_0278 (144 aa).

A substrate-binding site is contributed by H12. H101 acts as the Proton donor in catalysis. R135 contacts substrate.

It belongs to the LacAB/RpiB family.

The protein is Putative sugar phosphate isomerase RBE_0278 of Rickettsia bellii (strain RML369-C).